The sequence spans 194 residues: Holliday junction branch migration complex subunit RuvA (194 aa).

The tract at residues 1–64 (MIARLSGILV…EDAQLLYGFG (64 aa)) is domain I. Positions 65–141 (SDQERATFRQ…FAIDGGTALA (77 aa)) are domain II. The segment at 141–144 (AGSN) is flexible linker. Residues 145-194 (PAKSASSDVLNALLALGYNEREALAAVKQLPADIAVAEGIKLSLKSLSKT) are domain III.

The protein belongs to the RuvA family. In terms of assembly, homotetramer. Forms an RuvA(8)-RuvB(12)-Holliday junction (HJ) complex. HJ DNA is sandwiched between 2 RuvA tetramers; dsDNA enters through RuvA and exits via RuvB. An RuvB hexamer assembles on each DNA strand where it exits the tetramer. Each RuvB hexamer is contacted by two RuvA subunits (via domain III) on 2 adjacent RuvB subunits; this complex drives branch migration. In the full resolvosome a probable DNA-RuvA(4)-RuvB(12)-RuvC(2) complex forms which resolves the HJ.

The protein resides in the cytoplasm. In terms of biological role, the RuvA-RuvB-RuvC complex processes Holliday junction (HJ) DNA during genetic recombination and DNA repair, while the RuvA-RuvB complex plays an important role in the rescue of blocked DNA replication forks via replication fork reversal (RFR). RuvA specifically binds to HJ cruciform DNA, conferring on it an open structure. The RuvB hexamer acts as an ATP-dependent pump, pulling dsDNA into and through the RuvAB complex. HJ branch migration allows RuvC to scan DNA until it finds its consensus sequence, where it cleaves and resolves the cruciform DNA. The chain is Holliday junction branch migration complex subunit RuvA from Methylobacillus flagellatus (strain ATCC 51484 / DSM 6875 / VKM B-1610 / KT).